The following is a 134-amino-acid chain: Thyrotropin subunit beta (134 aa).

Positions 1 to 16 (MSPFFMMSLLFGLTFG) are cleaved as a signal peptide. 6 disulfide bridges follow: C22–C72, C36–C87, C39–C125, C47–C103, C51–C105, and C108–C115. N-linked (GlcNAc...) asparagine glycosylation is present at N43.

Belongs to the glycoprotein hormones subunit beta family. In terms of assembly, heterodimer of a common alpha chain and a unique beta chain which confers biological specificity to thyrotropin, lutropin, follitropin and gonadotropin.

Its subcellular location is the secreted. Functionally, indispensable for the control of thyroid structure and metabolism. The chain is Thyrotropin subunit beta (TSHB) from Gallus gallus (Chicken).